Consider the following 685-residue polypeptide: Protein argonaute (685 aa).

The N-terminal domain stretch occupies residues 1 to 99 (MNHLGKTEVF…LYPKGRRPLD (99 aa)). Positions 100–176 (PKDPGERSVL…VDPAYRILCE (77 aa)) are linker L1. The region spanning 169–265 (PAYRILCEMS…HLTGLLVPVL (97 aa)) is the PAZ domain. The segment at 272–337 (EEEGSLALSL…SKPADALRVG (66 aa)) is linker L2. The segment at 338–463 (FYRAQETALA…LLAKAGLQVV (126 aa)) is mid domain. Positions 464 to 685 (ALSGAYPAEL…EVDREKLFFV (222 aa)) are PIWI domain. Active-site residues include D478, E512, D546, and D660. Residue D478 coordinates Mn(2+). The region spanning 507-671 (EAQAGERIPQ…LVKEVGRLGI (165 aa)) is the Piwi domain. Residues D546, D660, and V685 each contribute to the Mn(2+) site.

This sequence belongs to the argonaute family. Long pAgo subfamily. As to quaternary structure, coimmunoprecipitates with a number of proteins involved in DNA replication or recombination including RepA (initiates replication), AddA/B (TT_C0638 and TT_C0639), ArgR, GyrA/B, HU (TT_C0984), PriA, Rad52 (TT_C1923), RecJ, SSB, TopA and UvrB. Most proteins remain associated with TtAgo after DNase treatment and associate with catalytically inactive protein. Mn(2+) is required as a cofactor.

In terms of biological role, a DNA-guided ssDNA endonuclease. Uses short ssDNA sequences as guides (gDNA, also called small interfering DNA, siDNA) to bind complementary DNA target strands, resulting in cleavage of the target DNA (tDNA). The cleavage site is 10 nucleotides (nt) downstream of the target residue base-paired with the 5'-end of the gDNA. Plays a role in completion of DNA replication, participates in decatenating replicated DNA and plasmid. In situ purifies with 5'-phosphorylated long DNA (about 1160 nt, maps to the whole chromosome and plasmid), 25-35 nt RNAs that map to the whole chromosome and 15-18 nt DNA that maps to the replication terminus region (ter) on the chromosome and plasmid. Most short DNA starts with dC. Has been shown to have guide sequence-independent dsDNase activity called 'chopping', which requires unstable DNA (high AT-content, multiple mismatches or low salt conditions), and could be used to generate gDNA. Preferentially binds tDNA with dC at its 3'-terminus. Has also been shown to have no detectable guide sequence-independent dsDNase activity. The latter study proposes TtAgo may acquire gDNA from nicked dsDNA, by binding to 5'-phosphorylated-dC nicks, then cleaving 10 nt away on the opposite strand; subsequently an exonuclease (maybe AddA-AddB helicase/nuclease) trims the ends to generate the gDNA. Its function is as follows. Involved in defense against invading mobile genetic elements. TtAgo interferes with plasmid DNA, stimulates expression of specific endogenous genes, including various CRISPR loci and at least part of the CRISPR adaptation machinery, but only when exogenous plasmid DNA is present. Upon purification from E.coli associates with gDNA 13-25 nt long with 5'-phosphorylated ends and with 10-150 nt RNA with 5'-OH. DNA corresponds to the expression plasmid rather than chromosomal DNA; 89% of gDNA starts with dC and 72% has dA in the second position. Endonucleolytically cleaves tDNA with 5'-phosphorylated gDNA but not 5'-phosphorylated gRNA; the active site is involved in processing or binding of ssDNA. Nicks or linearizes supercoiled plasmid target when it has the appropriate gDNA sequences, does not cleave linear tDNA. Positions 4 to 16 of the tDNA need to be base paired to the gDNA for efficient tDNA cleavage. Although the system can support single nucleotide insertions in either the gDNA or tDNA, in all cases cleavage activity is reduced, with a wide range of sequence- and position-specific effects. First characterized as a DNA-guided RNA endonuclease. Uses gDNA to bind complementary RNA target strands, resulting in cleavage of the target RNA. The cleavage site is 10 nucleotides (nt) downstream of the target residue base-paired with the 5'-end of the guide DNA. This is Protein argonaute from Thermus thermophilus (strain ATCC BAA-163 / DSM 7039 / HB27).